A 205-amino-acid chain; its full sequence is Small ribosomal subunit protein uS4 (205 aa).

The disordered stretch occupies residues 17-46; it reads ENIWGRPKSPVNKREYGPGQHGQRRKGKLS. In terms of domain architecture, S4 RNA-binding spans 94–157; sequence SRLDAVVYRA…KQLVIVLESV (64 aa).

The protein belongs to the universal ribosomal protein uS4 family. Part of the 30S ribosomal subunit. Contacts protein S5. The interaction surface between S4 and S5 is involved in control of translational fidelity.

Its function is as follows. One of the primary rRNA binding proteins, it binds directly to 16S rRNA where it nucleates assembly of the body of the 30S subunit. With S5 and S12 plays an important role in translational accuracy. This is Small ribosomal subunit protein uS4 from Mesorhizobium japonicum (strain LMG 29417 / CECT 9101 / MAFF 303099) (Mesorhizobium loti (strain MAFF 303099)).